The sequence spans 63 residues: Large ribosomal subunit protein bL32 (63 aa).

The protein belongs to the bacterial ribosomal protein bL32 family.

The protein is Large ribosomal subunit protein bL32 of Acholeplasma laidlawii.